We begin with the raw amino-acid sequence, 223 residues long: ATP-dependent dethiobiotin synthetase BioD (223 aa).

Thr-16 is a Mg(2+) binding site. Residue Lys-37 is part of the active site. Ser-41 is a binding site for substrate. Positions 50 and 111 each coordinate Mg(2+). Residues Asp-50, 111–114 (EGAG), and 171–172 (NR) each bind ATP.

This sequence belongs to the dethiobiotin synthetase family. As to quaternary structure, homodimer. Mg(2+) serves as cofactor.

It is found in the cytoplasm. It carries out the reaction (7R,8S)-7,8-diammoniononanoate + CO2 + ATP = (4R,5S)-dethiobiotin + ADP + phosphate + 3 H(+). Its pathway is cofactor biosynthesis; biotin biosynthesis; biotin from 7,8-diaminononanoate: step 1/2. Catalyzes a mechanistically unusual reaction, the ATP-dependent insertion of CO2 between the N7 and N8 nitrogen atoms of 7,8-diaminopelargonic acid (DAPA, also called 7,8-diammoniononanoate) to form a ureido ring. The protein is ATP-dependent dethiobiotin synthetase BioD of Anaeromyxobacter dehalogenans (strain 2CP-C).